The following is an 838-amino-acid chain: Probable glucan 1,3-beta-glucosidase D (838 aa).

The segment covering 1-23 has biased composition (basic and acidic residues); that stretch reads MPSHSRSRDRYRGRDESEPERDR. The interval 1–298 is disordered; it reads MPSHSRSRDR…GASDSDMDGA (298 aa). Residues 1 to 310 lie on the Cytoplasmic side of the membrane; that stretch reads MPSHSRSRDR…GTPFWKKKKT (310 aa). The segment covering 35–45 has biased composition (acidic residues); the sequence is DYEDDELDDDD. Composition is skewed to basic and acidic residues over residues 111 to 124, 149 to 164, 200 to 221, and 234 to 246; these read DSPRRRDRHRDGDR, SRDDRRERAYESEREA, AKLRSEYDKEDRSRAKADAKAE, and QPRRLDPFPEETP. A helical; Signal-anchor for type II membrane protein membrane pass occupies residues 311 to 331; it reads WIAVGVVVVLLAIIIPVAVVV. Topologically, residues 332–838 are extracellular; the sequence is SKKNNEKKSD…PDFGDLPENY (507 aa). The tract at residues 335–359 is disordered; it reads NNEKKSDSTTDDTTPRNSNLDGISR. N-linked (GlcNAc...) asparagine glycans are attached at residues Asn-383, Asn-388, Asn-400, Asn-553, and Asn-565. Glu-604 serves as the catalytic Proton donor. Residues Asn-643 and Asn-696 are each glycosylated (N-linked (GlcNAc...) asparagine). Glu-709 (nucleophile) is an active-site residue.

This sequence belongs to the glycosyl hydrolase 5 (cellulase A) family.

The protein resides in the cell membrane. It carries out the reaction Successive hydrolysis of beta-D-glucose units from the non-reducing ends of (1-&gt;3)-beta-D-glucans, releasing alpha-glucose.. Its function is as follows. Glucosidase involved in the degradation of cellulosic biomass. Active on lichenan. The sequence is that of Probable glucan 1,3-beta-glucosidase D (exgD) from Aspergillus terreus (strain NIH 2624 / FGSC A1156).